Here is a 460-residue protein sequence, read N- to C-terminus: N-myc proto-oncogene protein (460 aa).

Residues 19–47 (LEFDSLQPCFYPDEDDFYFGGPDSTPPGE) are interaction with AURKA. Positions 61 to 90 (LSPSRAFSEQSPEPSDWATEMLLPEADLWG) are interaction with AURKA and FBXW7. The short motif at 76-85 (DWATEMLLPE) is the 9aaTAD element. Disordered stretches follow at residues 131–169 (VSEK…GAGR), 221–288 (AAAP…SNSK), and 330–388 (APSP…LERQ). The span at 138 to 158 (GRGPPAAGPATPGAGAANPAG) shows a compositional bias: low complexity. The segment covering 159–169 (RGHGGTAGAGR) has biased composition (gly residues). Over residues 221 to 233 (AAAPASAAVAAPP) the composition is skewed to low complexity. The span at 255-274 (TLSDSDDEDDEEEDEEEEID) shows a compositional bias: acidic residues. A phosphoserine; by CK2 mark is found at serine 257 and serine 259. One can recognise a bHLH domain in the interval 377–429 (ERRRNHNILERQRRNDLRSSFLTLRDHVPELVKNEKAAKVVILKKATEYVHSL). Positions 429–450 (LQAEEHQLLLEKEKLQARQQQL) are leucine-zipper.

In terms of assembly, efficient DNA binding requires dimerization with another bHLH protein. Binds DNA as a heterodimer with MAX. Interacts with KDM5A, KDM5B and HUWE1. Interacts with MYCNOS. Interacts with AURKA; interaction is phospho-independent and triggers AURKA activation; AURKA competes with FBXW7 for binding to unphosphorylated MYCN but not for binding to unphosphorylated MYCN. Interacts with FBXW7; FBXW7 competes with AURKA for binding to unphosphorylated MYCN but not for binding to phosphorylated MYCN. In terms of processing, phosphorylated by GSK3-beta which may promote its degradation. Phosphorylated by AURKA.

It localises to the nucleus. Positively regulates the transcription of MYCNOS in neuroblastoma cells. The protein is N-myc proto-oncogene protein (MYCN) of Marmota monax (Woodchuck).